We begin with the raw amino-acid sequence, 255 residues long: Imidazole glycerol phosphate synthase subunit HisF (255 aa).

Catalysis depends on residues D12 and D131.

It belongs to the HisA/HisF family. As to quaternary structure, heterodimer of HisH and HisF.

The protein localises to the cytoplasm. It catalyses the reaction 5-[(5-phospho-1-deoxy-D-ribulos-1-ylimino)methylamino]-1-(5-phospho-beta-D-ribosyl)imidazole-4-carboxamide + L-glutamine = D-erythro-1-(imidazol-4-yl)glycerol 3-phosphate + 5-amino-1-(5-phospho-beta-D-ribosyl)imidazole-4-carboxamide + L-glutamate + H(+). The protein operates within amino-acid biosynthesis; L-histidine biosynthesis; L-histidine from 5-phospho-alpha-D-ribose 1-diphosphate: step 5/9. In terms of biological role, IGPS catalyzes the conversion of PRFAR and glutamine to IGP, AICAR and glutamate. The HisF subunit catalyzes the cyclization activity that produces IGP and AICAR from PRFAR using the ammonia provided by the HisH subunit. This Salinispora tropica (strain ATCC BAA-916 / DSM 44818 / JCM 13857 / NBRC 105044 / CNB-440) protein is Imidazole glycerol phosphate synthase subunit HisF.